We begin with the raw amino-acid sequence, 691 residues long: Solute carrier organic anion transporter family member 1B1 (691 aa).

The Cytoplasmic segment spans residues 1–28 (MDQNQHLNKTAEAQPSENKKTRYCNGLK). The helical transmembrane segment at 29–48 (MFLAALSLSFIAKTLGAIIM) threads the bilayer. Topologically, residues 49 to 67 (KSSIIHIERRFEISSSLVG) are extracellular. A helical transmembrane segment spans residues 68 to 88 (FIDGSFEIGNLLVIVFVSYFG). Residues 89 to 94 (SKLHRP) are Cytoplasmic-facing. Residues 95-119 (KLIGIGCFIMGIGGVLTALPHFFMG) form a helical membrane-spanning segment. Topologically, residues 120–168 (YYRYSKETNINSSENSTSTLSTCLINQILSLNRASPEIVGKGCLKESGS) are extracellular. 2 N-linked (GlcNAc...) asparagine glycosylation sites follow: Asn-130 and Asn-134. Residues 169–197 (YMWIYVFMGNMLRGIGETPIVPLGLSYID) traverse the membrane as a helical segment. Residues 198 to 216 (DFAKEGHSSLYLGILNAIA) are Cytoplasmic-facing. Residues 217–237 (MIGPIIGFTLGSLFSKMYVDI) traverse the membrane as a helical segment. Residues 238–255 (GYVDLSTIRITPTDSRWV) are Extracellular-facing. Residues 256-280 (GAWWLNFLVSGLFSIISSIPFFFLP) form a helical membrane-spanning segment. Topologically, residues 281 to 331 (QTPNKPQKERKASLSLHVLETNDEKDQTANLTNQGKNITKNVTGFFQSFKS) are cytoplasmic. A phosphoserine mark is found at Ser-293 and Ser-295. A helical transmembrane segment spans residues 332-353 (ILTNPLYVMFVLLTLLQVSSYI). Residues 354-373 (GAFTYVFKYVEQQYGQPSSK) are Extracellular-facing. Residues 374–397 (ANILLGVITIPIFASGMFLGGYII) traverse the membrane as a helical segment. Topologically, residues 398 to 401 (KKFK) are cytoplasmic. The helical transmembrane segment at 402 to 425 (LNTVGIAKFSCFTAVMSLSFYLLY) threads the bilayer. The Extracellular portion of the chain corresponds to 426 to 537 (FFILCENKSV…DACTRKFYFF (112 aa)). N-linked (GlcNAc...) asparagine glycosylation is present at Asn-432. The 56-residue stretch at 453–508 (DVPLSYCNSDCNCDESQWEPVCGNNGITYISPCLAGCKSSSGNKKPIVFYNCSCLE) folds into the Kazal-like domain. 3 disulfide bridges follow: Cys-459-Cys-489, Cys-465-Cys-485, and Cys-474-Cys-506. Residues Asn-503 and Asn-516 are each glycosylated (N-linked (GlcNAc...) asparagine). The chain crosses the membrane as a helical span at residues 538–560 (VAIQVLNLFFSALGGTSHVMLIV). Over 561–569 (KIVQPELKS) the chain is Cytoplasmic. Residues 570-595 (LALGFHSMVIRALGGILAPIYFGALI) traverse the membrane as a helical segment. The Extracellular portion of the chain corresponds to 596 to 629 (DTTCIKWSTNNCGTRGSCRTYNSTSFSRVYLGLS). A glycan (N-linked (GlcNAc...) asparagine) is linked at Asn-617. The helical transmembrane segment at 630–647 (SMLRVSSLVLYIILIYAM) threads the bilayer. The Cytoplasmic segment spans residues 648-691 (KKKYQEKDINASENGSVMDEANLESLNKNKHFVPSAGADSETHC). Phosphoserine occurs at positions 672 and 682.

This sequence belongs to the organo anion transporter (TC 2.A.60) family. Highly expressed in liver, at the basolateral membranes of centrilobular hepatocytes. Expressed in liver (at protein level). Expressed in fetal liver. Not detected in heart, brain, placenta, lung, skeletal muscle, kidney, pancreas, spleen, thymus, prostate, testis, ovary, small intestine, colon and leukocyte. In testis, primarily localized to the basal membrane of Sertoli cells and weakly expressed in Leydig cells and within the tubules.

It localises to the basolateral cell membrane. Its subcellular location is the basal cell membrane. It carries out the reaction taurocholate(out) = taurocholate(in). The enzyme catalyses dehydroepiandrosterone 3-sulfate(out) = dehydroepiandrosterone 3-sulfate(in). It catalyses the reaction estrone 3-sulfate(out) = estrone 3-sulfate(in). The catalysed reaction is 3,3',5'-triiodo-L-thyronine(out) = 3,3',5'-triiodo-L-thyronine(in). It carries out the reaction L-thyroxine(out) = L-thyroxine(in). The enzyme catalyses prostaglandin E2(out) = prostaglandin E2(in). It catalyses the reaction thromboxane B2(out) = thromboxane B2(in). The catalysed reaction is 17beta-estradiol 17-O-(beta-D-glucuronate)(out) = 17beta-estradiol 17-O-(beta-D-glucuronate)(in). It carries out the reaction leukotriene C4(out) = leukotriene C4(in). The enzyme catalyses leukotriene E4(out) = leukotriene E4(in). It catalyses the reaction (4E,15E)-bilirubin IXalpha C8-beta-D-glucuronoside(out) = (4E,15E)-bilirubin IXalpha C8-beta-D-glucuronoside(in). The catalysed reaction is bilirubin IXalpha bis-beta-D-glucuronoside(out) = bilirubin IXalpha bis-beta-D-glucuronoside(in). In terms of biological role, mediates the Na(+)-independent uptake of organic anions. Shows broad substrate specificity, can transport both organic anions such as bile acid taurocholate (cholyltaurine) and conjugated steroids (dehydroepiandrosterone 3-sulfate, 17-beta-glucuronosyl estradiol, and estrone 3-sulfate), as well as eicosanoids (prostaglandin E2, thromboxane B2, leukotriene C4, and leukotriene E4), and thyroid hormones (T4/L-thyroxine, and T3/3,3',5'-triiodo-L-thyronine). Can take up bilirubin glucuronides from plasma into the liver, contributing to the detoxification-enhancing liver-blood shuttling loop. Involved in the clearance of endogenous and exogenous substrates from the liver. Transports coproporphyrin I and III, by-products of heme synthesis, and may be involved in their hepatic disposition. May contribute to regulate the transport of organic compounds in testes across the blood-testis-barrier. Can transport HMG-CoA reductase inhibitors (also known as statins), such as pravastatin and pitavastatin, a clinically important class of hypolipidemic drugs. May play an important role in plasma and tissue distribution of the structurally diverse chemotherapeutic drug methotrexate. May also transport antihypertension agents, such as the angiotensin-converting enzyme (ACE) inhibitor prodrug enalapril, and the highly selective angiotensin II AT1-receptor antagonist valsartan, in the liver. Shows a pH-sensitive substrate specificity towards prostaglandin E2 and T4 which may be ascribed to the protonation state of the binding site and leads to a stimulation of substrate transport in an acidic microenvironment. Hydrogencarbonate/HCO3(-) acts as the probable counteranion that exchanges for organic anions. This Homo sapiens (Human) protein is Solute carrier organic anion transporter family member 1B1 (SLCO1B1).